Here is a 319-residue protein sequence, read N- to C-terminus: Ferrochelatase (319 aa).

Fe cation contacts are provided by His193 and Glu274.

Belongs to the ferrochelatase family.

Its subcellular location is the cytoplasm. The enzyme catalyses heme b + 2 H(+) = protoporphyrin IX + Fe(2+). Its pathway is porphyrin-containing compound metabolism; protoheme biosynthesis; protoheme from protoporphyrin-IX: step 1/1. Catalyzes the ferrous insertion into protoporphyrin IX. The chain is Ferrochelatase from Actinobacillus pleuropneumoniae serotype 7 (strain AP76).